Consider the following 807-residue polypeptide: Mechanosensitive cation channel TMEM63A (807 aa).

The Extracellular segment spans residues 1–51 (MMDSPFLELWQSKAVSIREQLGLGDRPNDSYCYNSAKNSTVLQGVTFGGIP). N38 is a glycosylation site (N-linked (GlcNAc...) asparagine). A helical transmembrane segment spans residues 52–74 (TVLLIDVSCFLFLILVFSIIRRR). Over 75–134 (FWDYGRIALVSEADSESRFQRLSSTSSSGQQDFENELGCCPWLTAIFRLHDDQILEWCGE) the chain is Cytoplasmic. The chain crosses the membrane as a helical span at residues 135-167 (DAIHYLSFQRHIIFLLVVVSFLSLCVILPVNLS). Residues 168-191 (GDLLDKDPYSFGRTTIANLQTDND) lie on the Extracellular side of the membrane. A helical transmembrane segment spans residues 192 to 217 (LLWLHTIFAVIYLFLTVGFMRHHTQS). Residues 218 to 416 (IKYKEENLVR…CWKNLSIQGL (199 aa)) lie on the Cytoplasmic side of the membrane. The segment at 219–414 (KYKEENLVRR…DICWKNLSIQ (196 aa)) is intracellular linker IL2; confers mechanosensitivity. A helical transmembrane segment spans residues 417 to 444 (RWWLQWLGINFTLFLGLFFLTTPSIILS). The Extracellular segment spans residues 445-462 (TMDKFNVTKPIHALNNPI). The N-linked (GlcNAc...) asparagine glycan is linked to N450. Residues 463-490 (ISQFFPTLLLWSFSALLPSIVYYSTLLE) traverse the membrane as a helical segment. The Cytoplasmic portion of the chain corresponds to 491–495 (SHWTK). Residues 496-532 (SGENQIMMTKVYIFLIFMVLILPSLGLTSLDFFFRWL) traverse the membrane as a helical segment. The Extracellular segment spans residues 533 to 554 (FDKTSSEASIRLECVFLPDQGA). The helical transmembrane segment at 555 to 586 (FFVNYVIASAFIGNGMELLRLPGLILYTFRMI) threads the bilayer. The interval 555-586 (FFVNYVIASAFIGNGMELLRLPGLILYTFRMI) is gating helix. The Cytoplasmic segment spans residues 587 to 606 (MAKTAADRRNVKQNQAFQYE). Residues 607 to 624 (FGAMYAWMLCVFTVIVAY) form a helical membrane-spanning segment. The Extracellular portion of the chain corresponds to 625–628 (SITC). Residues 629-651 (PIIAPFGLIYILLKHMVDRHNLY) traverse the membrane as a helical segment. The Cytoplasmic portion of the chain corresponds to 652–661 (FVYLPAKLEK). A helical transmembrane segment spans residues 662–689 (GIHFAAVNQALAAPILCLFWLYFFSFLR). Topologically, residues 690 to 694 (LGMKA) are extracellular. Residues 695 to 709 (PATLFTFLVLLLTIL) form a helical membrane-spanning segment. Topologically, residues 710 to 807 (VCLAHTCFGC…GSVAAAPQEA (98 aa)) are cytoplasmic. A Phosphoserine modification is found at S739.

This sequence belongs to the CSC1 (TC 1.A.17) family. In terms of assembly, monomer. Post-translationally, N-Glycosylated.

It is found in the lysosome membrane. The protein localises to the early endosome membrane. The protein resides in the cell membrane. The enzyme catalyses Ca(2+)(in) = Ca(2+)(out). In terms of biological role, mechanosensitive cation channel with low conductance and high activation threshold. In contrast to TMEM63B, does not show phospholipid scramblase activity. Acts as a regulator of lysosomal morphology by mediating lysosomal mechanosensitivity. Important for the baby's first breath and respiration throughout life. Upon lung inflation conducts cation currents in alveolar type 1 and 2 cells triggering lamellar body exocytosis and surfactant secretion into airspace. Also acts as an osmosensitive cation channel preferentially activated by hypotonic stress. The protein is Mechanosensitive cation channel TMEM63A of Homo sapiens (Human).